The sequence spans 182 residues: MVSRNIESTSKVPTFHVIREVYDSSNAHERFEAELDKALEAKLDFIVIEPPRLGDETGRWIWVGNCLHKTAVATGVVSLVASLLWRDRPIIAAPACALSIFCTGLYTVSWNYDPCCQYQVENNDTVLEKLPLTDVSSPVILGYSPNSKTKYLHRSVSLLSAALCAWQIWRSYNRFVHSAGSG.

Ser-25 carries the phosphoserine modification. 2 consecutive transmembrane segments (helical) span residues Thr-70–Pro-89 and Ile-91–Val-108.

It belongs to the TMEM11 family.

The protein localises to the mitochondrion inner membrane. Plays a role in mitochondrial morphogenesis. The chain is Transmembrane protein 11 homolog, mitochondrial (Pmi) from Drosophila melanogaster (Fruit fly).